We begin with the raw amino-acid sequence, 760 residues long: 5-methyltetrahydropteroyltriglutamate--homocysteine methyltransferase (760 aa).

5-methyltetrahydropteroyltri-L-glutamate contacts are provided by residues 17–20 (RELK) and Lys113. Residues 433-435 (IGS) and Glu486 contribute to the L-homocysteine site. L-methionine contacts are provided by residues 433 to 435 (IGS) and Glu486. 5-methyltetrahydropteroyltri-L-glutamate is bound by residues 517–518 (RC) and Trp563. Asp601 is an L-homocysteine binding site. An L-methionine-binding site is contributed by Asp601. 5-methyltetrahydropteroyltri-L-glutamate is bound at residue Glu607. Positions 643, 645, and 667 each coordinate Zn(2+). His696 serves as the catalytic Proton donor. Cys728 contacts Zn(2+).

This sequence belongs to the vitamin-B12 independent methionine synthase family. Zn(2+) is required as a cofactor.

The catalysed reaction is 5-methyltetrahydropteroyltri-L-glutamate + L-homocysteine = tetrahydropteroyltri-L-glutamate + L-methionine. The protein operates within amino-acid biosynthesis; L-methionine biosynthesis via de novo pathway; L-methionine from L-homocysteine (MetE route): step 1/1. In terms of biological role, catalyzes the transfer of a methyl group from 5-methyltetrahydrofolate to homocysteine resulting in methionine formation. The protein is 5-methyltetrahydropteroyltriglutamate--homocysteine methyltransferase of Chromobacterium violaceum (strain ATCC 12472 / DSM 30191 / JCM 1249 / CCUG 213 / NBRC 12614 / NCIMB 9131 / NCTC 9757 / MK).